The primary structure comprises 206 residues: MSANELTSGDFTESGEPFKLFAEWLGEAEASEPNDPNAVALATVDEDGLPNVRMVLLKGFDDNGFVFYTNFESQKGREILGQKKAAMCFHWKSLRRQVRLRGPVEIVTDAEADAYFKTRARGSRIGAWASKQSRPLESRFALEKAVAEYTARYAIGEIPRPAHWSGFRIRPTSIEFWKDQNFRLHDRIEFRRPLPEGAWDKVRMYP.

FMN contacts are provided by residues 53 to 58, 68 to 69, K75, and Q97; these read RMVLLK and YT. A substrate-binding site is contributed by K58. Substrate is bound by residues Y115, R119, and S123. FMN is bound by residues 132–133 and W177; that span reads QS. 183–185 lines the substrate pocket; the sequence is RLH. R187 contributes to the FMN binding site.

The protein belongs to the pyridoxamine 5'-phosphate oxidase family. Homodimer. FMN serves as cofactor.

The catalysed reaction is pyridoxamine 5'-phosphate + O2 + H2O = pyridoxal 5'-phosphate + H2O2 + NH4(+). The enzyme catalyses pyridoxine 5'-phosphate + O2 = pyridoxal 5'-phosphate + H2O2. It participates in cofactor metabolism; pyridoxal 5'-phosphate salvage; pyridoxal 5'-phosphate from pyridoxamine 5'-phosphate: step 1/1. Its pathway is cofactor metabolism; pyridoxal 5'-phosphate salvage; pyridoxal 5'-phosphate from pyridoxine 5'-phosphate: step 1/1. In terms of biological role, catalyzes the oxidation of either pyridoxine 5'-phosphate (PNP) or pyridoxamine 5'-phosphate (PMP) into pyridoxal 5'-phosphate (PLP). The sequence is that of Pyridoxine/pyridoxamine 5'-phosphate oxidase from Rhizobium leguminosarum bv. trifolii (strain WSM2304).